A 118-amino-acid polypeptide reads, in one-letter code: MNQRAAGAVYEQQARRYLERAGLTFTAANVTLRGGELDLIMRDRHIWVFVEVRYRRNAHFGDAAASVTRHKQQRLLHAAAVWLAQRGASFDTVDCRFDVLAITGDRFDWIPNAFATQG.

This sequence belongs to the UPF0102 family.

This Pectobacterium carotovorum subsp. carotovorum (strain PC1) protein is UPF0102 protein PC1_0307.